We begin with the raw amino-acid sequence, 329 residues long: Mitochondrial substrate carrier family protein W (329 aa).

The Mitochondrial intermembrane portion of the chain corresponds to Met-1–Glu-39. 3 Solcar repeats span residues His-34–Leu-119, Glu-133–Ile-221, and Leu-231–Phe-321. A helical transmembrane segment spans residues Met-40–Ile-60. At Lys-61 to Asn-90 the chain is on the mitochondrial matrix side. The chain crosses the membrane as a helical span at residues Leu-91–Ser-111. Residues Thr-112–Pro-135 are Mitochondrial intermembrane-facing. Residues Leu-136–Ile-156 form a helical membrane-spanning segment. Residues Trp-157–Gly-193 lie on the Mitochondrial matrix side of the membrane. A helical transmembrane segment spans residues Leu-194 to Leu-214. Residues Tyr-215–Glu-230 lie on the Mitochondrial intermembrane side of the membrane. The chain crosses the membrane as a helical span at residues Leu-231 to Ala-251. Over Tyr-252–Gly-296 the chain is Mitochondrial matrix. The helical transmembrane segment at Met-297–Tyr-315 threads the bilayer. Over Glu-316–Phe-329 the chain is Mitochondrial intermembrane.

This sequence belongs to the mitochondrial carrier (TC 2.A.29) family.

Its subcellular location is the mitochondrion inner membrane. Its function is as follows. Mitochondrial solute carriers shuttle metabolites, nucleotides, and cofactors through the mitochondrial inner membrane. This Dictyostelium discoideum (Social amoeba) protein is Mitochondrial substrate carrier family protein W (mcfW).